The primary structure comprises 377 residues: MKLSHMLLSLASLGVATALPRTPNHNAATTAFPSTSGLHFTIDGKTGYFAGTNSYWIGFLTNNDDVDLVMSQLAASDLKILRVWGFNDVNTKPTDGTVWYQLHANGTSTINTGADGLQRLDYVVTSAEKYGVKLIINFVNEWTDYGGMQAYVTAYGAAAQTDFYTNTAIQAAYKNYIKAVVSRYSSSAAIFAWELANEPRCQGCDTSVLYNWISDTSKYIKSLDSKHLVTIGDEGFGLDVDSDGSYPYTYGEGLNFTKNLGISTIDFGTLHLYPDSWGTSYDWGNGWITAHAAACKAVGKPCLLEEYGVTSNHCAVESPWQQTAGNATGISGDLYWQYGTTFSWGQSPNDGNTFYYNTSDFTCLVTDHVAAINAQSK.

A signal peptide spans 1-18; sequence MKLSHMLLSLASLGVATA. W84 lines the substrate pocket. N-linked (GlcNAc...) asparagine glycosylation is present at N105. N197 provides a ligand contact to substrate. E198 serves as the catalytic Proton donor. N255 carries N-linked (GlcNAc...) asparagine glycosylation. Residue Y273 coordinates substrate. The active-site Nucleophile is E306. N-linked (GlcNAc...) asparagine glycosylation is present at N326. Residue W336 participates in substrate binding. N357 carries N-linked (GlcNAc...) asparagine glycosylation.

Belongs to the glycosyl hydrolase 5 (cellulase A) family.

The protein localises to the secreted. The enzyme catalyses Random hydrolysis of (1-&gt;4)-beta-D-mannosidic linkages in mannans, galactomannans and glucomannans.. Its function is as follows. Endo-1,4-mannanase, a crucial enzyme for depolymerization of seed galactomannans and wood galactoglucomannans. In Aspergillus aculeatus, this protein is Mannan endo-1,4-beta-mannosidase A (manA).